Reading from the N-terminus, the 469-residue chain is Probable monogalactosyldiacylglycerol synthase 2, chloroplastic (469 aa).

The N-terminal 42 residues, methionine 1–glycine 42, are a transit peptide targeting the chloroplast.

This sequence belongs to the glycosyltransferase 28 family.

The protein localises to the plastid. It is found in the chloroplast membrane. The enzyme catalyses a 1,2-diacyl-sn-glycerol + UDP-alpha-D-galactose = a 1,2-diacyl-3-O-(beta-D-galactosyl)-sn-glycerol + UDP + H(+). Functionally, involved in the synthesis of the major structural component of photosynthetic membranes. The protein is Probable monogalactosyldiacylglycerol synthase 2, chloroplastic (MGD2) of Oryza sativa subsp. indica (Rice).